The following is a 328-amino-acid chain: Ribosomal RNA small subunit methyltransferase C (328 aa).

This sequence belongs to the methyltransferase superfamily. RsmC family. As to quaternary structure, monomer.

The protein localises to the cytoplasm. It carries out the reaction guanosine(1207) in 16S rRNA + S-adenosyl-L-methionine = N(2)-methylguanosine(1207) in 16S rRNA + S-adenosyl-L-homocysteine + H(+). Its function is as follows. Specifically methylates the guanine in position 1207 of 16S rRNA in the 30S particle. The protein is Ribosomal RNA small subunit methyltransferase C of Pasteurella multocida (strain Pm70).